The sequence spans 408 residues: Acetylornithine aminotransferase (408 aa).

Pyridoxal 5'-phosphate contacts are provided by residues Gly107–Thr108 and Phe141. N(2)-acetyl-L-ornithine is bound at residue Arg144. Asp227–Gln230 is a pyridoxal 5'-phosphate binding site. Lys256 is modified (N6-(pyridoxal phosphate)lysine). Thr284 lines the N(2)-acetyl-L-ornithine pocket. A pyridoxal 5'-phosphate-binding site is contributed by Thr285.

Belongs to the class-III pyridoxal-phosphate-dependent aminotransferase family. ArgD subfamily. As to quaternary structure, homodimer. The cofactor is pyridoxal 5'-phosphate.

Its subcellular location is the cytoplasm. The enzyme catalyses N(2)-acetyl-L-ornithine + 2-oxoglutarate = N-acetyl-L-glutamate 5-semialdehyde + L-glutamate. The protein operates within amino-acid biosynthesis; L-arginine biosynthesis; N(2)-acetyl-L-ornithine from L-glutamate: step 4/4. This is Acetylornithine aminotransferase from Xanthomonas campestris pv. campestris (strain ATCC 33913 / DSM 3586 / NCPPB 528 / LMG 568 / P 25).